The chain runs to 86 residues: Putative membrane protein insertion efficiency factor (86 aa).

The segment at Gly-64–Ser-86 is disordered. Positions Lys-70–Thr-79 are enriched in low complexity.

This sequence belongs to the UPF0161 family.

The protein localises to the cell inner membrane. Functionally, could be involved in insertion of integral membrane proteins into the membrane. The sequence is that of Putative membrane protein insertion efficiency factor from Janthinobacterium sp. (strain Marseille) (Minibacterium massiliensis).